Reading from the N-terminus, the 428-residue chain is Serine--tRNA ligase (428 aa).

231–233 contributes to the L-serine binding site; that stretch reads TAE. An ATP-binding site is contributed by 262–264; that stretch reads RSE. Residue glutamate 285 participates in L-serine binding. An ATP-binding site is contributed by 349–352; the sequence is EISS. An L-serine-binding site is contributed by serine 385.

It belongs to the class-II aminoacyl-tRNA synthetase family. Type-1 seryl-tRNA synthetase subfamily. As to quaternary structure, homodimer. The tRNA molecule binds across the dimer.

It localises to the cytoplasm. It catalyses the reaction tRNA(Ser) + L-serine + ATP = L-seryl-tRNA(Ser) + AMP + diphosphate + H(+). The catalysed reaction is tRNA(Sec) + L-serine + ATP = L-seryl-tRNA(Sec) + AMP + diphosphate + H(+). The protein operates within aminoacyl-tRNA biosynthesis; selenocysteinyl-tRNA(Sec) biosynthesis; L-seryl-tRNA(Sec) from L-serine and tRNA(Sec): step 1/1. Catalyzes the attachment of serine to tRNA(Ser). Is also able to aminoacylate tRNA(Sec) with serine, to form the misacylated tRNA L-seryl-tRNA(Sec), which will be further converted into selenocysteinyl-tRNA(Sec). The sequence is that of Serine--tRNA ligase from Staphylococcus aureus (strain MW2).